Here is a 201-residue protein sequence, read N- to C-terminus: 3-isopropylmalate dehydratase small subunit (201 aa).

This sequence belongs to the LeuD family. LeuD type 1 subfamily. In terms of assembly, heterodimer of LeuC and LeuD.

The enzyme catalyses (2R,3S)-3-isopropylmalate = (2S)-2-isopropylmalate. It participates in amino-acid biosynthesis; L-leucine biosynthesis; L-leucine from 3-methyl-2-oxobutanoate: step 2/4. Catalyzes the isomerization between 2-isopropylmalate and 3-isopropylmalate, via the formation of 2-isopropylmaleate. The protein is 3-isopropylmalate dehydratase small subunit of Escherichia coli O127:H6 (strain E2348/69 / EPEC).